The primary structure comprises 425 residues: Homogentisate 1,2-dioxygenase (425 aa).

The active-site Proton acceptor is the histidine 283. The Fe cation site is built by histidine 326 and glutamate 332. Homogentisate is bound by residues tyrosine 341 and histidine 362. Position 362 (histidine 362) interacts with Fe cation.

Belongs to the homogentisate dioxygenase family. Hexamer; dimer of trimers. It depends on Fe cation as a cofactor.

The catalysed reaction is homogentisate + O2 = 4-maleylacetoacetate + H(+). It functions in the pathway amino-acid degradation; L-phenylalanine degradation; acetoacetate and fumarate from L-phenylalanine: step 4/6. Involved in the catabolism of homogentisate (2,5-dihydroxyphenylacetate or 2,5-OH-PhAc), a central intermediate in the degradation of phenylalanine and tyrosine. Catalyzes the oxidative ring cleavage of the aromatic ring of homogentisate to yield maleylacetoacetate. This chain is Homogentisate 1,2-dioxygenase, found in Caulobacter vibrioides (strain ATCC 19089 / CIP 103742 / CB 15) (Caulobacter crescentus).